Here is a 64-residue protein sequence, read N- to C-terminus: MLFRTYIHRYVHTKALRFLRFNPIKGRSLMAHIRRTRHIMMPSYRSCFSYSLFASQNKPSNRAL.

An Ornithine recognition loop motif is present at residues His-32–His-38. Residue Arg-35 coordinates L-ornithine.

This sequence belongs to the speF operon leader peptide family. Binds ornithine in stalled 70S ribosomes, blocking the upper two-thirds of the exit tunnel. Contacts 23S rRNA and ribosomal proteins L4 and L22.

Functionally, a small protein (arrest peptide) encoded upstream of inducible ornithine carboxylase gene (speF) that controls expression of downstream genes (usually speF and potE) by transcriptional and translational attenuation. The sequence is that of Leader peptide SpeFL from Haemophilus influenzae (strain ATCC 51907 / DSM 11121 / KW20 / Rd).